A 78-amino-acid chain; its full sequence is Putative membrane protein insertion efficiency factor (78 aa).

Belongs to the UPF0161 family.

The protein localises to the cell membrane. In terms of biological role, could be involved in insertion of integral membrane proteins into the membrane. The chain is Putative membrane protein insertion efficiency factor from Bacillus anthracis (strain A0248).